The sequence spans 200 residues: MEHRGASPLLLALALLSALCWRARALPPRGAAFPAVPRLGNRLPFDAASESDRAHGSLKSESDILQNTLPENEKFYFDLSRIIDRNARHADGIFTSVYSHLLAKLAVKRYLHSLIRKRVSSQDSPVKRHSDAVFTDNYSRFRKQMAVKKYLNSVLTGKRSQEELNPAKLRGEAEILEPSFSENYDDVSVDELLSHLPLDL.

Positions 1-25 (MEHRGASPLLLALALLSALCWRARA) are cleaved as a signal peptide. Propeptides lie at residues 26–87 (LPPR…DRNA) and 119–126 (VSSQDSPV). Threonine amide is present on Thr156. Positions 160 to 200 (SQEELNPAKLRGEAEILEPSFSENYDDVSVDELLSHLPLDL) are excised as a propeptide.

Belongs to the glucagon family.

Its subcellular location is the secreted. Its function is as follows. VIP is a neuropeptide involved in a diverse array of physiological processes through activating the PACAP subfamily of class B1 G protein-coupled receptors: VIP receptor 1 (VPR1) and VIP receptor 2 (VPR2). Abundantly expressed throughout the CNS and peripheral nervous systems where they primarily exert neuroprotective and immune modulatory roles. Also causes vasodilation, lowers arterial blood pressure, stimulates myocardial contractility, increases glycogenolysis and relaxes the smooth muscle of trachea, stomach and gall bladder. PHM-27 is a bioactive form from proteolysis of the same precursor protein, that causes vasodilation. This chain is VIP peptides (VIP), found in Gallus gallus (Chicken).